We begin with the raw amino-acid sequence, 46 residues long: uncharacterized protein (46 aa).

Residues 12–34 traverse the membrane as a helical segment; sequence HFNHFVIALSFIYGLTELGYLLL.

The protein localises to the cell membrane. This is an uncharacterized protein from Bacillus subtilis (strain 168).